Here is a 1387-residue protein sequence, read N- to C-terminus: Magnesium-chelatase subunit ChlH, chloroplastic (1387 aa).

Residues 1–50 (MSSLVSTPFTTATGVQKKLGAPVPLHSFLLSRRQPAAGAGRGRAAAAAIR) constitute a chloroplast transit peptide.

It belongs to the Mg-chelatase subunit H family. As to quaternary structure, the magnesium chelatase complex is a heterotrimer consisting of subunits CHLI, CHLD and CHLH.

The protein localises to the plastid. Its subcellular location is the chloroplast stroma. The protein resides in the chloroplast membrane. The catalysed reaction is protoporphyrin IX + Mg(2+) + ATP + H2O = Mg-protoporphyrin IX + ADP + phosphate + 3 H(+). It participates in porphyrin-containing compound metabolism; chlorophyll biosynthesis. Functionally, involved in chlorophyll biosynthesis. Catalyzes the insertion of magnesium ion into protoporphyrin IX to yield Mg-protoporphyrin IX. The reaction takes place in two steps, with an ATP-dependent activation followed by an ATP-dependent chelation step. May be involved in the plastid-to-nucleus retrograde signaling. In Oryza sativa subsp. indica (Rice), this protein is Magnesium-chelatase subunit ChlH, chloroplastic (CHLH).